A 297-amino-acid chain; its full sequence is ATP phosphoribosyltransferase (297 aa).

Met-1 is modified (N-acetylmethionine).

Belongs to the ATP phosphoribosyltransferase family.

It localises to the cytoplasm. The catalysed reaction is 1-(5-phospho-beta-D-ribosyl)-ATP + diphosphate = 5-phospho-alpha-D-ribose 1-diphosphate + ATP. It participates in amino-acid biosynthesis; L-histidine biosynthesis; L-histidine from 5-phospho-alpha-D-ribose 1-diphosphate: step 1/9. Functionally, catalyzes the condensation of ATP and 5-phosphoribose 1-diphosphate to form N'-(5'-phosphoribosyl)-ATP (PR-ATP). Has a crucial role in the pathway because the rate of histidine biosynthesis seems to be controlled primarily by regulation of the enzymatic activity. The polypeptide is ATP phosphoribosyltransferase (HIS1) (Saccharomyces cerevisiae (strain ATCC 204508 / S288c) (Baker's yeast)).